Reading from the N-terminus, the 78-residue chain is Large ribosomal subunit protein eL38 (78 aa).

The protein belongs to the eukaryotic ribosomal protein eL38 family.

This is Large ribosomal subunit protein eL38 (RpL38) from Maconellicoccus hirsutus (Pink hibiscus mealybug).